A 217-amino-acid polypeptide reads, in one-letter code: Probable nicotinate-nucleotide adenylyltransferase (217 aa).

It belongs to the NadD family.

The catalysed reaction is nicotinate beta-D-ribonucleotide + ATP + H(+) = deamido-NAD(+) + diphosphate. It participates in cofactor biosynthesis; NAD(+) biosynthesis; deamido-NAD(+) from nicotinate D-ribonucleotide: step 1/1. In terms of biological role, catalyzes the reversible adenylation of nicotinate mononucleotide (NaMN) to nicotinic acid adenine dinucleotide (NaAD). This Moorella thermoacetica (strain ATCC 39073 / JCM 9320) protein is Probable nicotinate-nucleotide adenylyltransferase.